The following is a 255-amino-acid chain: tRNA (guanine-N(1)-)-methyltransferase (255 aa).

S-adenosyl-L-methionine-binding positions include glycine 113 and 133–138; that span reads VGDFVL.

The protein belongs to the RNA methyltransferase TrmD family. As to quaternary structure, homodimer.

The protein localises to the cytoplasm. The enzyme catalyses guanosine(37) in tRNA + S-adenosyl-L-methionine = N(1)-methylguanosine(37) in tRNA + S-adenosyl-L-homocysteine + H(+). Specifically methylates guanosine-37 in various tRNAs. The polypeptide is tRNA (guanine-N(1)-)-methyltransferase (Francisella philomiragia subsp. philomiragia (strain ATCC 25017 / CCUG 19701 / FSC 153 / O#319-036)).